Here is a 416-residue protein sequence, read N- to C-terminus: PDZ and LIM domain protein 7 (416 aa).

In terms of domain architecture, PDZ spans Met-1–Gln-85. Disordered stretches follow at residues Cys-145–Pro-191 and Thr-202–Arg-221. A compositionally biased stretch (low complexity) spans Pro-168–Pro-181. 3 LIM zinc-binding domains span residues Pro-239–Ala-297, Pro-298–Thr-357, and Lys-358–Val-416.

As to quaternary structure, interacts with various PKC isoforms through the LIM zinc-binding domains. Interacts with TPM2. Interacts with TBX4 and TBX5.

Its subcellular location is the cytoplasm. The protein localises to the cytoskeleton. The protein resides in the myofibril. It localises to the sarcomere. It is found in the z line. May function as a scaffold on which the coordinated assembly of proteins can occur. May play a role as an adapter that, via its PDZ domain, localizes LIM-binding proteins to actin filaments of both skeletal muscle and nonmuscle tissues. May be involved in bone formation. This Gallus gallus (Chicken) protein is PDZ and LIM domain protein 7 (PDLIM7).